Consider the following 142-residue polypeptide: Hemoglobin subunit alpha-1 (142 aa).

Positions 2–142 constitute a Globin domain; it reads VLSPADKTNV…VSTVLTSKYR (141 aa). O2 is bound at residue histidine 59. Position 88 (histidine 88) interacts with heme b.

This sequence belongs to the globin family. Heterotetramer of two alpha chains and two beta chains. As to expression, red blood cells.

Functionally, involved in oxygen transport from the lung to the various peripheral tissues. In terms of biological role, hemopressin acts as an antagonist peptide of the cannabinoid receptor CNR1. Hemopressin-binding efficiently blocks cannabinoid receptor CNR1 and subsequent signaling. The chain is Hemoglobin subunit alpha-1 (HBA1) from Hylobates lar (Lar gibbon).